We begin with the raw amino-acid sequence, 317 residues long: Cytochrome f (317 aa).

Positions 1-34 (MKGLKNQIMKKTSLFICTLLFILSIVFYPKITFA) are cleaved as a signal peptide. Residues Tyr35, Cys55, Cys58, and His59 each coordinate heme. A helical membrane pass occupies residues 284 to 304 (VIGLIAFFIGVGLTQILLVLK).

The protein belongs to the cytochrome f family. The 4 large subunits of the cytochrome b6-f complex are cytochrome b6, subunit IV (17 kDa polypeptide, PetD), cytochrome f and the Rieske protein, while the 4 small subunits are PetG, PetL, PetM and PetN. The complex functions as a dimer. Requires heme as cofactor.

The protein resides in the cellular thylakoid membrane. Its function is as follows. Component of the cytochrome b6-f complex, which mediates electron transfer between photosystem II (PSII) and photosystem I (PSI), cyclic electron flow around PSI, and state transitions. This is Cytochrome f from Prochlorococcus marinus (strain MIT 9215).